The primary structure comprises 370 residues: Protein RKD5 (370 aa).

A disordered region spans residues 193–232 (DSETESEESVNEKTEHSEFENDKTEQSESDAKTEILKKKK). Over residues 202–228 (VNEKTEHSEFENDKTEQSESDAKTEIL) the composition is skewed to basic and acidic residues. Positions 224-309 (KTEILKKKKR…AEKQQEKNEA (86 aa)) constitute an RWP-RK domain. A coiled-coil region spans residues 283-328 (HRKIKSLDCLIHDLQREAEKQQEKNEAAAMAVAKKQEKLETEKRNI). The interval 347 to 370 (NFKKRHRASRAKKNQESLVTSSST) is disordered. The span at 349-358 (KKRHRASRAK) shows a compositional bias: basic residues.

Its subcellular location is the nucleus. Its function is as follows. Putative transcription factor. The polypeptide is Protein RKD5 (RKD5) (Arabidopsis thaliana (Mouse-ear cress)).